Here is a 485-residue protein sequence, read N- to C-terminus: Glutamyl-tRNA(Gln) amidotransferase subunit A (485 aa).

Residues lysine 78 and serine 153 each act as charge relay system in the active site. The active-site Acyl-ester intermediate is the serine 177.

This sequence belongs to the amidase family. GatA subfamily. In terms of assembly, heterotrimer of A, B and C subunits.

It catalyses the reaction L-glutamyl-tRNA(Gln) + L-glutamine + ATP + H2O = L-glutaminyl-tRNA(Gln) + L-glutamate + ADP + phosphate + H(+). In terms of biological role, allows the formation of correctly charged Gln-tRNA(Gln) through the transamidation of misacylated Glu-tRNA(Gln) in organisms which lack glutaminyl-tRNA synthetase. The reaction takes place in the presence of glutamine and ATP through an activated gamma-phospho-Glu-tRNA(Gln). The sequence is that of Glutamyl-tRNA(Gln) amidotransferase subunit A from Geotalea daltonii (strain DSM 22248 / JCM 15807 / FRC-32) (Geobacter daltonii).